The sequence spans 899 residues: Semaphorin-1A (899 aa).

Over residues methionine 1–asparagine 20 the composition is skewed to low complexity. Residues methionine 1 to lysine 24 are disordered. Residues methionine 1–lysine 40 lie on the Cytoplasmic side of the membrane. A helical transmembrane segment spans residues leucine 41–isoleucine 61. Residues glycine 62–leucine 657 lie on the Extracellular side of the membrane. Asparagine 63, asparagine 90, and asparagine 117 each carry an N-linked (GlcNAc...) asparagine glycan. Residues lysine 74 to leucine 543 enclose the Sema domain. 2 disulfides stabilise this stretch: cysteine 141–cysteine 151 and cysteine 169–cysteine 178. Asparagine 187, asparagine 207, and asparagine 311 each carry an N-linked (GlcNAc...) asparagine glycan. 2 disulfides stabilise this stretch: cysteine 288/cysteine 402 and cysteine 312/cysteine 361. N-linked (GlcNAc...) asparagine glycosylation occurs at asparagine 404. A helical membrane pass occupies residues valine 658–phenylalanine 678. At cysteine 679–aspartate 899 the chain is on the cytoplasmic side. Disordered stretches follow at residues valine 735–asparagine 766 and valine 798–aspartate 899. Over residues phenylalanine 809–arginine 827 the composition is skewed to polar residues. A compositionally biased stretch (basic residues) spans serine 828–proline 837. The span at serine 847 to serine 876 shows a compositional bias: low complexity.

It belongs to the semaphorin family. Expressed by subsets of neurons and muscles.

It is found in the cell membrane. Involved in growth cone guidance through its role in axonal repulsion. Function in neurons is essential for adult survival, motor neuron survival, and is important for climbing behavior and activity. The polypeptide is Semaphorin-1A (Drosophila melanogaster (Fruit fly)).